The primary structure comprises 856 residues: Histone-lysine N-methyltransferase EZA1 (856 aa).

The segment covering 1–11 (MVTDDSNSSGR) has biased composition (polar residues). Disordered regions lie at residues 1–34 (MVTD…GLEN), 66–87 (VSPF…NSNM), and 366–473 (NVDS…HHGS). The span at 17–28 (DDDDDGEEEEDR) shows a compositional bias: acidic residues. The stretch at 22–49 (GEEEEDRLEGLENRLSELKRKIQGERVR) forms a coiled coil. Positions 68–87 (PFSSAASSRATAEDNGNSNM) are enriched in polar residues. The span at 374 to 392 (EQEHGIRGKREVPILKDSN) shows a compositional bias: basic and acidic residues. A compositionally biased stretch (polar residues) spans 393 to 419 (DLPNLSNKKQKTAASDTKMSFVNSVPS). Positions 438 to 451 (KVNRDSEADAKEVG) are enriched in basic and acidic residues. Positions 489–539 (PSTEWNPIEKDLYLKGVEIFGRNSCLIARNLLSGLKTCLDVSNYMRENEVS) constitute an SANT domain. One can recognise a CXC domain in the interval 594–693 (WKRIAGGKNQ…SLGEAPRRGE (100 aa)). In terms of domain architecture, SET spans 707-822 (QRILLGKSDV…ASEELFYDYR (116 aa)). Residue Y821 coordinates S-adenosyl-L-methionine. Residues 827 to 856 (QAPVWARKPEGSKKDDSAITHRRARKHQSH) form a disordered region. Basic and acidic residues predominate over residues 833–845 (RKPEGSKKDDSAI). Positions 838–845 (SKKDDSAI) match the Nuclear localization signal motif. The span at 846–856 (THRRARKHQSH) shows a compositional bias: basic residues.

It belongs to the class V-like SAM-binding methyltransferase superfamily. Histone-lysine methyltransferase family. EZ subfamily. As to quaternary structure, component of the plant homeodomain / polycomb repressive complex 2 (PHD-PRC2) large complex during prolonged cold, composed of core PRC2 components (VRN2, EZA1, FIE and MSI1), and three related PHD finger proteins (VIL1, VIL2 and VIN3) that mediates histone H3 trimethylation on 'Lys-27' H3K27me3. Interacts with TAF13. Interacts with EOL1. Interacts (via SANT domain) with HXK1 in the nucleus.

It localises to the nucleus. The enzyme catalyses L-lysyl(27)-[histone H3] + 3 S-adenosyl-L-methionine = N(6),N(6),N(6)-trimethyl-L-lysyl(27)-[histone H3] + 3 S-adenosyl-L-homocysteine + 3 H(+). Its function is as follows. Polycomb group (PcG) protein. Catalytic subunit of some PcG multiprotein complex, which methylates 'Lys-27' of histone H3, leading to transcriptional repression of the affected target genes, mainly abscisic acid (ABA) responsive elements. PcG proteins act by forming multiprotein complexes, which are required to maintain the transcriptionally repressive state of homeotic genes throughout development. PcG proteins are not required to initiate repression, but to maintain it during later stages of development. Forms a nuclear complex with CLF and HXK1 to target common glucose-responsive genes and regulate glucose signaling by glucose-mediated gene repression. Affects the recruitment of HXK1 to the target chromatin. The chain is Histone-lysine N-methyltransferase EZA1 from Arabidopsis thaliana (Mouse-ear cress).